Reading from the N-terminus, the 328-residue chain is Interleukin-12 subunit beta (328 aa).

The signal sequence occupies residues 1–22 (MCHQQLVISWFSLVFLASPLMA). The Ig-like C2-type domain occupies 29-106 (DVYVVELDWY…LSHSLLLLHK (78 aa)). The cysteines at positions 50 and 90 are disulfide-linked. 4 N-linked (GlcNAc...) asparagine glycosylation sites follow: N125, N135, N222, and N303. The Fibronectin type-III domain maps to 237-328 (PPKNLQLKPL…WSEWASVPCS (92 aa)).

The protein belongs to the IL-12B family. In terms of assembly, heterodimer with IL12A; disulfide-linked. The heterodimer is known as interleukin IL-12. Heterodimer with IL23A; disulfide-linked. The heterodimer is known as interleukin IL-23. Also secreted as a monomer. Interacts with NBR1; this interaction promotes IL-12 secretion.

The protein resides in the secreted. Its function is as follows. Cytokine that can act as a growth factor for activated T and NK cells, enhance the lytic activity of NK/lymphokine-activated killer cells, and stimulate the production of IFN-gamma by resting PBMC. In terms of biological role, associates with IL23A to form the IL-23 interleukin, a heterodimeric cytokine which functions in innate and adaptive immunity. IL-23 may constitute with IL-17 an acute response to infection in peripheral tissues. IL-23 binds to a heterodimeric receptor complex composed of IL12RB1 and IL23R, activates the Jak-Stat signaling cascade, stimulates memory rather than naive T-cells and promotes production of pro-inflammatory cytokines. IL-23 induces autoimmune inflammation and thus may be responsible for autoimmune inflammatory diseases and may be important for tumorigenesis. The sequence is that of Interleukin-12 subunit beta (IL12B) from Papio anubis (Olive baboon).